A 57-amino-acid chain; its full sequence is Plasma membrane proteolipid 3 (57 aa).

Residues 34-54 form a helical membrane-spanning segment; it reads INILLTILGYLPGIVHALYII.

It belongs to the UPF0057 (PMP3) family.

The protein resides in the cell membrane. Its function is as follows. Plays a role in the regulation of membrane potential. Could mediate a proton leak. In Neurospora crassa (strain ATCC 24698 / 74-OR23-1A / CBS 708.71 / DSM 1257 / FGSC 987), this protein is Plasma membrane proteolipid 3 (pmp-1).